The chain runs to 495 residues: UDP-glycosyltransferase 73C6 (495 aa).

UDP-alpha-D-glucose-binding positions include Ser296, 356–358 (SPQ), 373–381 (HCGWNSTLE), and 395–398 (FADQ). The disordered stretch occupies residues 449 to 475 (SDDAKERRRRAKELGESAHKAVEEGGS). Basic and acidic residues predominate over residues 450 to 471 (DDAKERRRRAKELGESAHKAVE).

It belongs to the UDP-glycosyltransferase family. As to expression, expressed in leaves and flowers, and at a very low level in roots.

Acts as a UDP-glucose:flavonol-3-O-glycoside-7-O-glucosyltransferase. 6- and 7-hydroxyflavone, but not 3- or 5-hydroxyflavone are accepted as substrates. Possesses low quercetin 3-O-glucosyltransferase, 7-O-glucosyltransferase and 4'-O-glucosyltransferase activities in vitro. This is UDP-glycosyltransferase 73C6 (UGT73C6) from Arabidopsis thaliana (Mouse-ear cress).